We begin with the raw amino-acid sequence, 375 residues long: CC-adding tRNA nucleotidyltransferase (375 aa).

27–30 (GAVR) contacts CTP. 2 residues coordinate Mg(2+): D40 and D42. Residues 95–96 (RD), N100, 137–146 (DPLRMLRAPR), and R177 each bind CTP.

The protein belongs to the tRNA nucleotidyltransferase/poly(A) polymerase family. Requires Mg(2+) as cofactor.

It catalyses the reaction a tRNA precursor + 2 CTP = a tRNA with a 3' CC end + 2 diphosphate. Its function is as follows. tRNA nucleotidyltransferase involved in the synthesis of the tRNA CCA terminus. Adds the two cytidine residues to tRNA. The protein is CC-adding tRNA nucleotidyltransferase of Halalkalibacterium halodurans (strain ATCC BAA-125 / DSM 18197 / FERM 7344 / JCM 9153 / C-125) (Bacillus halodurans).